A 3313-amino-acid chain; its full sequence is Cadherin EGF LAG seven-pass G-type receptor 3 (3313 aa).

The signal sequence occupies residues 1 to 31; sequence MARRPLWWGLPGPSTPLLLLLLFSLFPSSRE. At 32 to 2538 the chain is on the extracellular side; the sequence is EMGGGGDQGW…RLEGDLELLA (2507 aa). Disordered stretches follow at residues 148–187 and 205–269; these read LPLDALSPGDSDLRNSSPHPSELLAQPDSPRPVAFQRNGR and EPGH…RMRS. The span at 258 to 268 shows a compositional bias: basic and acidic residues; that stretch reads HESRTAPERMR. Cadherin domains lie at 317 to 424, 425 to 536, 537 to 642, 643 to 747, 748 to 849, 850 to 952, 953 to 1058, 1059 to 1160, and 1161 to 1257; these read PQYN…APVF, EQAQ…APQF, SEKR…SPIF, VSTP…RPEF, TMKE…RPVF, QSAH…APQF, VASH…APVF, PAEE…SPVL, and NNFQ…VVII. N-linked (GlcNAc...) asparagine glycosylation occurs at N623. The N-linked (GlcNAc...) asparagine glycan is linked to N838. 4 N-linked (GlcNAc...) asparagine glycosylation sites follow: N1173, N1213, N1308, and N1318. The 59-residue stretch at 1366 to 1424 folds into the EGF-like 1; calcium-binding domain; it reads DDNVCLREPCENYMKCVSVLRFDSSAPFLASASTLFRPIQPIAGLRCRCPPGFTGDFCE. Intrachain disulfides connect C1370-C1381, C1375-C1412, C1414-C1423, C1430-C1441, C1435-C1450, C1452-C1461, C1470-C1481, C1475-C1491, and C1493-C1504. The EGF-like 2; calcium-binding domain maps to 1426–1462; it reads ELDLCYSNPCRNGGACARREGGYTCVCRPRFTGEDCE. Residues 1466-1505 enclose the EGF-like 3; calcium-binding domain; the sequence is EAGRCVPGVCRNGGTCTNAPNGGFRCQCPAGGAFEGPRCE. Residues 1506 to 1710 form the Laminin G-like 1 domain; the sequence is VAARSFPPSS…VANNGTTAGC (205 aa). N-linked (GlcNAc...) asparagine glycans are attached at residues N1640 and N1704. 4 disulfides stabilise this stretch: C1684–C1710, C1717–C1728, C1722–C1737, and C1739–C1748. The EGF-like 4; calcium-binding domain occupies 1713-1749; that stretch reads KSHFCASGPCKNGGLCSERWGGFSCDCPVGFGGKDCR. Residues 1753 to 1935 form the Laminin G-like 2 domain; that stretch reads AHPYHFQGNG…SHRINVEPGC (183 aa). A glycan (N-linked (GlcNAc...) asparagine) is linked at N1761. 9 disulfides stabilise this stretch: C1906-C1935, C1941-C1952, C1946-C1961, C1963-C1972, C1976-C1987, C1981-C1999, C2001-C2010, C2018-C2031, and C2033-C2043. One can recognise an EGF-like 5; calcium-binding domain in the interval 1937–1972; sequence VTNPCASGPCPPHANCKDLWQTFSCTCWPGYYGPGC. D1954 bears the (3R)-3-hydroxyaspartate mark. Residues 1973 to 2011 form the EGF-like 6; calcium-binding domain; sequence VDACLLNPCQNQGSCRHLQGGPHGYTCDCASGYFGQHCE. Residues 2012-2044 enclose the EGF-like 7; calcium-binding domain; sequence HRMDQQCPRGWWGSPTCGPCNCDVHKGFDPNCN. N2044 carries an N-linked (GlcNAc...) asparagine glycan. An EGF-like 8; calcium-binding domain is found at 2046 to 2081; sequence TSGQCHCKEFHYRPRGSDSCLPCDCYPVGSTSRSCA. Intrachain disulfides connect C2050–C2065, C2052–C2068, C2070–C2080, C2089–C2098, and C2101–C2113. A Laminin EGF-like domain is found at 2068-2115; that stretch reads CDCYPVGSTSRSCAPHSGQCPCRPGALGRQCNSCDSPFAEVTASGCRV. Y2117 is subject to Phosphotyrosine. N2173, N2192, N2382, N2472, and N2504 each carry an N-linked (GlcNAc...) asparagine glycan. The tract at residues 2356–2395 is disordered; it reads HTHVLLPSQSPQPSPSEVLPTSSNAENATASGVVSPPAPL. The GAIN-B domain maps to 2364 to 2528; the sequence is QSPQPSPSEV…GVLMDASPRE (165 aa). The segment covering 2374–2387 has biased composition (polar residues); sequence LPTSSNAENATASG. 2 cysteine pairs are disulfide-bonded: C2478–C2510 and C2498–C2512. Residues 2478-2528 are GPS; that stretch reads CVQWDPPGPADQHGMWTARDCELVHRNGSHARCRCSRTGTFGVLMDASPRE. A helical transmembrane segment spans residues 2539–2559; that stretch reads VFTHVVVAASVTALVLTAAVL. Residues 2560 to 2570 lie on the Cytoplasmic side of the membrane; the sequence is LSLRSLKSNVR. Residues 2571 to 2591 traverse the membrane as a helical segment; the sequence is GIHANVAAALGVAELLFLLGI. Residues 2592–2599 lie on the Extracellular side of the membrane; the sequence is HRTHNQLL. Residues 2600–2620 form a helical membrane-spanning segment; the sequence is CTVVAILLHYFFLSTFAWLLV. The Cytoplasmic portion of the chain corresponds to 2621 to 2641; the sequence is QGLHLYRMQVEPRNVDRGAMR. Residues 2642–2662 form a helical membrane-spanning segment; it reads FYHALGWGVPAVLLGLAVGLD. Topologically, residues 2663-2679 are extracellular; it reads PEGYGNPDFCWISIHEP. Residues 2680-2700 traverse the membrane as a helical segment; the sequence is LIWSFAGPIVLVIVMNGIMFL. The Cytoplasmic portion of the chain corresponds to 2701-2724; that stretch reads LAARTSCSTGQREAKKTSVLRTLR. Residues 2725–2745 form a helical membrane-spanning segment; it reads SSFLLLLLVSASWLFGLLAVN. The Extracellular portion of the chain corresponds to 2746–2752; the sequence is HSVLAFH. The helical transmembrane segment at 2753-2773 threads the bilayer; it reads YLHAGLCGLQGLAVLLLFCVL. At 2774–3313 the chain is on the cytoplasmic side; the sequence is NADARAAWTP…SEVPRSEGHS (540 aa). Disordered regions lie at residues 2887-2927 and 2977-3004; these read AGAD…RPLR and SNKDAANNNQPELALTSGDETSLGRAQR. Acidic residues predominate over residues 2889-2899; the sequence is ADSDSDSDLSL. Basic residues predominate over residues 2918-2927; that stretch reads TRGRFQRPLR. Phosphotyrosine is present on Y3050. 2 disordered regions span residues 3091–3242 and 3255–3313; these read APVL…PSTE and NSSA…EGHS. Position 3098 is a phosphoserine (S3098). Over residues 3102–3119 the composition is skewed to basic and acidic residues; sequence SQERLDTAPARLEPRDRG. Low complexity-rich tracts occupy residues 3178 to 3197 and 3255 to 3289; these read QRPLSRDPLLPSRPLDSLSR and NSSALSSVQSSSTPSGPHTTATPSATASALGPSTP. A compositionally biased stretch (polar residues) spans 3290–3301; that stretch reads RSATSHSISELS.

The protein belongs to the G-protein coupled receptor 2 family. LN-TM7 subfamily. Post-translationally, the iron and 2-oxoglutarate dependent 3-hydroxylation of aspartate and asparagine is (R) stereospecific within EGF domains. As to expression, expressed in the brain. Expressed in cerebellum, olfactory bulb, cerebral cortex, hippocampus and brain stem.

The protein localises to the cell membrane. In terms of biological role, receptor that may have an important role in cell/cell signaling during nervous system formation. The sequence is that of Cadherin EGF LAG seven-pass G-type receptor 3 (Celsr3) from Rattus norvegicus (Rat).